Reading from the N-terminus, the 602-residue chain is Isocitrate dehydrogenase kinase/phosphatase (602 aa).

ATP contacts are provided by residues 327–333 (APGIKGM) and Lys-348. Asp-383 is a catalytic residue.

It belongs to the AceK family.

The protein localises to the cytoplasm. It catalyses the reaction L-seryl-[isocitrate dehydrogenase] + ATP = O-phospho-L-seryl-[isocitrate dehydrogenase] + ADP + H(+). Its function is as follows. Bifunctional enzyme which can phosphorylate or dephosphorylate isocitrate dehydrogenase (IDH) on a specific serine residue. This is a regulatory mechanism which enables bacteria to bypass the Krebs cycle via the glyoxylate shunt in response to the source of carbon. When bacteria are grown on glucose, IDH is fully active and unphosphorylated, but when grown on acetate or ethanol, the activity of IDH declines drastically concomitant with its phosphorylation. This Paraburkholderia phymatum (strain DSM 17167 / CIP 108236 / LMG 21445 / STM815) (Burkholderia phymatum) protein is Isocitrate dehydrogenase kinase/phosphatase.